The primary structure comprises 172 residues: Large ribosomal subunit protein uL10 (172 aa).

Belongs to the universal ribosomal protein uL10 family. As to quaternary structure, part of the ribosomal stalk of the 50S ribosomal subunit. The N-terminus interacts with L11 and the large rRNA to form the base of the stalk. The C-terminus forms an elongated spine to which L12 dimers bind in a sequential fashion forming a multimeric L10(L12)X complex.

Forms part of the ribosomal stalk, playing a central role in the interaction of the ribosome with GTP-bound translation factors. This chain is Large ribosomal subunit protein uL10, found in Methylorubrum extorquens (strain CM4 / NCIMB 13688) (Methylobacterium extorquens).